The following is a 642-amino-acid chain: Threonine--tRNA ligase (642 aa).

The TGS domain maps to 1–61 (MPVITLPDGS…ETDATLSIIT (61 aa)). The segment at 243–534 (DHRKIGKQLD…LTEETAGYFP (292 aa)) is catalytic. Zn(2+) is bound by residues cysteine 334, histidine 385, and histidine 511.

This sequence belongs to the class-II aminoacyl-tRNA synthetase family. Homodimer. It depends on Zn(2+) as a cofactor.

The protein localises to the cytoplasm. It carries out the reaction tRNA(Thr) + L-threonine + ATP = L-threonyl-tRNA(Thr) + AMP + diphosphate + H(+). Catalyzes the attachment of threonine to tRNA(Thr) in a two-step reaction: L-threonine is first activated by ATP to form Thr-AMP and then transferred to the acceptor end of tRNA(Thr). Also edits incorrectly charged L-seryl-tRNA(Thr). In Tolumonas auensis (strain DSM 9187 / NBRC 110442 / TA 4), this protein is Threonine--tRNA ligase.